The sequence spans 216 residues: Fibroblast growth factor 17 (216 aa).

A signal peptide spans 1–22 (MGAARLLPNLTLCLQLLILCCQ). The N-linked (GlcNAc...) asparagine glycan is linked to Asn137. The disordered stretch occupies residues 190–216 (EKQKQFEFVGSAPTRRTKRTRRPQPLT). The span at 204 to 216 (RRTKRTRRPQPLT) shows a compositional bias: basic residues.

It belongs to the heparin-binding growth factors family. Interacts with FGFR3 and FGFR4. As to expression, preferentially expressed in the embryonic brain.

It is found in the secreted. In terms of biological role, plays an important role in the regulation of embryonic development and as signaling molecule in the induction and patterning of the embryonic brain. Required for normal brain development. In Homo sapiens (Human), this protein is Fibroblast growth factor 17 (FGF17).